Consider the following 93-residue polypeptide: Cytochrome c (93 aa).

Positions 1-13 (AALPPGDAAAAQG) are enriched in low complexity. The disordered stretch occupies residues 1-21 (AALPPGDAAAAQGGSNGVGPN). Methionine 70 is a heme c binding site.

This sequence belongs to the cytochrome c family. Binds 1 heme c group covalently per subunit.

It is found in the mitochondrion intermembrane space. Electron carrier protein. The oxidized form of the cytochrome c heme group can accept an electron from the heme group of the cytochrome c1 subunit of cytochrome reductase. Cytochrome c then transfers this electron to the cytochrome oxidase complex, the final protein carrier in the mitochondrial electron-transport chain. The chain is Cytochrome c from Trypanosoma brucei brucei.